The sequence spans 297 residues: CASP-like protein 4A2 (297 aa).

The tract at residues 1–136 is disordered; sequence MKMKRTVSSN…MNGEESATTA (136 aa). The Cytoplasmic segment spans residues 1–149; that stretch reads MKMKRTVSSN…ARRDDLVSVT (149 aa). Residues 8–19 show a composition bias toward low complexity; the sequence is SSNSEAYSYNES. Residues 69 to 83 are compositionally biased toward pro residues; that stretch reads LPSPIPPPPPQIPPP. The span at 93-121 shows a compositional bias: polar residues; the sequence is MNSSLDKSPSSMVVQNSWVREDGQQNTTR. A helical membrane pass occupies residues 150–170; that stretch reads ALGFRITEVILCVISFSIMAA. At 171 to 189 the chain is on the extracellular side; it reads DKTQGWSGDSYDRYKEYRY. Residues 190–210 traverse the membrane as a helical segment; that stretch reads CLAVNVIAFVYSAFEACDAAC. Topologically, residues 211–225 are cytoplasmic; the sequence is YMAKESYMMNCGFHD. A helical membrane pass occupies residues 226–246; it reads LFVFSMDQLLAYLLMSASSCA. The Extracellular segment spans residues 247–265; that stretch reads ATRVDDWVSNWGKDEFTQM. Residues 266-286 traverse the membrane as a helical segment; that stretch reads ATASIAVSFLAFGAFAVSALI. At 287–297 the chain is on the cytoplasmic side; the sequence is SSYRLFTHASS.

Belongs to the Casparian strip membrane proteins (CASP) family. Homodimer and heterodimers.

The protein resides in the cell membrane. The chain is CASP-like protein 4A2 from Arabidopsis lyrata subsp. lyrata (Lyre-leaved rock-cress).